A 448-amino-acid chain; its full sequence is Phosphoglucosamine mutase (448 aa).

The active-site Phosphoserine intermediate is the S100. Positions 100, 240, 242, and 244 each coordinate Mg(2+). Phosphoserine is present on S100.

It belongs to the phosphohexose mutase family. Mg(2+) serves as cofactor. In terms of processing, activated by phosphorylation.

The enzyme catalyses alpha-D-glucosamine 1-phosphate = D-glucosamine 6-phosphate. Catalyzes the conversion of glucosamine-6-phosphate to glucosamine-1-phosphate. In Bacillus velezensis (strain DSM 23117 / BGSC 10A6 / LMG 26770 / FZB42) (Bacillus amyloliquefaciens subsp. plantarum), this protein is Phosphoglucosamine mutase.